Consider the following 1077-residue polypeptide: Teashirt homolog 1-B (1077 aa).

2 disordered regions span residues 1 to 110 (MPRR…NASY) and 142 to 179 (NEKASPTTNTDKSSKSEASGPTSDPGTPTTITSSSCTN). Positions 26 to 36 (TEEDNLEDDGL) are enriched in acidic residues. Over residues 56 to 69 (TQSYQNSPISSATN) the composition is skewed to polar residues. Over residues 160-179 (SGPTSDPGTPTTITSSSCTN) the composition is skewed to low complexity. Residues 248–272 (FRCKDCSAAYDTLVELTVHMNETGH) form a C2H2-type 1 zinc finger. Over residues 274–286 (RDDNRDREAERTK) the composition is skewed to basic and acidic residues. The segment at 274–300 (RDDNRDREAERTKRWSKPRKRSLMEME) is disordered. The C2H2-type 2 zinc finger occupies 309 to 333 (LKCMYCGHSFESLQDLSVHMIKTKH). The interval 362-394 (ALPDSPEQAGISPGASVSESAKDPKAANPYVTP) is disordered. The C2H2-type 3 zinc-finger motif lies at 418 to 442 (LKCMECGSSHDTLQQLTAHMMVTGH). 2 disordered regions span residues 473-530 (PPTT…KIEP) and 849-873 (GRLTPKSSTPSTVSEKSDADGSSFE). A compositionally biased stretch (basic and acidic residues) spans 497–529 (HSEEKKDPEKEKVNIGEVEKKIKEENEDPEKIE). Polar residues predominate over residues 853 to 862 (PKSSTPSTVS). Positions 885 to 955 (RKGRQSNWNP…NVKYQLRRTG (71 aa)) form a DNA-binding region, homeobox. C2H2-type zinc fingers lie at residues 970–992 (FFCNDCASQFRTASTYIGHLETH) and 1037–1060 (FQCKLCNRTFASKHAVKLHLSKTH).

Belongs to the teashirt C2H2-type zinc-finger protein family.

Its subcellular location is the nucleus. Probable transcriptional regulator involved in developmental processes. May act as a transcriptional repressor (Potential). Involved in two major neuronal regionalization processes: primary anteroposterior (AP) axis patterning of the CNS and segmentation of the cranial neuronal crest (CNS) development. In Xenopus laevis (African clawed frog), this protein is Teashirt homolog 1-B (tshz1-b).